A 322-amino-acid chain; its full sequence is Basic 30 kDa endochitinase (322 aa).

The first 22 residues, 1 to 22, serve as a signal peptide directing secretion; that stretch reads MRLSEFTTLFLLFSVLLLSASA. The 42-residue stretch at 23-64 folds into the Chitin-binding type-1 domain; that stretch reads EQCGSQAGGALCASGLCCSKFGWCGNTNEYCGPGNCQSQCPG. Disulfide bonds link C25–C40, C34–C46, C39–C53, and C58–C62. Residues P66 and P68 each carry the 4-hydroxyproline modification. 3 disulfides stabilise this stretch: C93-C156, C168-C176, and C275-C307. The active-site Proton donor is E138. A propeptide spans 316–322 (removed in mature form); it reads GLLVDIM.

Belongs to the glycosyl hydrolase 19 family. Chitinase class I subfamily. Post-translationally, the 4-hydroxyproline residues are not glycosylated in this plant vacuolar protein.

It localises to the vacuole. Its subcellular location is the secreted. The protein resides in the cell wall. It carries out the reaction Random endo-hydrolysis of N-acetyl-beta-D-glucosaminide (1-&gt;4)-beta-linkages in chitin and chitodextrins.. Functionally, defense against chitin-containing fungal pathogens. The protein is Basic 30 kDa endochitinase (CHI9) of Solanum lycopersicum (Tomato).